The primary structure comprises 481 residues: Protein hedgehog (481 aa).

Cys93 is lipidated: N-palmitoyl cysteine. Residues Glu157, Glu158, Asp163, Thr193, Glu194, Asp197, and Asp199 each coordinate Ca(2+). Residue Gly265 is the site of Cholesterol glycine ester attachment.

Belongs to the hedgehog family. In terms of assembly, interacts with shf. Post-translationally, the C-terminal part of the hedgehog protein precursor displays an autoproteolysis activity that results in the cleavage of the full-length protein into two parts (N-product and C-product). In addition, the C-terminal part displays a cholesterol transferase activity that results by the covalent attachment of a cholesterol moiety to the C-terminal of the newly generated N-product. The N-product is the active species in both local and long-range signaling, whereas the C-product has no signaling activity. Cholesterylation is required for N-product targeting to lipid rafts and multimerization. In terms of processing, N-palmitoylation by Rasp of the hedgehog N-product, within the secretory pathway, is required for the embryonic and larval patterning activities of the hedgehog signal.

It is found in the nucleus. The protein resides in the cytoplasm. It localises to the cell membrane. It catalyses the reaction glycyl-L-cysteinyl-[protein] + cholesterol + H(+) = [protein]-C-terminal glycyl cholesterol ester + N-terminal L-cysteinyl-[protein]. The C-terminal part of the hedgehog protein precursor displays an autoproteolysis activity that results in the cleavage of the full-length protein into two parts (N-product and C-product). In addition, the C-terminal part displays a cholesterol transferase activity that results by the covalent attachment of a cholesterol moiety to the C-terminal of the newly generated N-product. Once cleaved, the C-product has no signaling activity and diffuses from the cell. In terms of biological role, the dually lipidated hedgehog protein N-product is a morphogen which is essential for a variety of patterning events during development. Establishes the anterior-posterior axis of the embryonic segments and patterns the larval imaginal disks. Binds to the patched (ptc) receptor, which functions in association with smoothened (smo), to activate the transcription of target genes wingless (wg), decapentaplegic (dpp) and ptc. In the absence of hh, ptc represses the constitutive signaling activity of smo through fused (fu). Essential component of a signaling pathway which regulates the Duox-dependent gut immune response to bacterial uracil; required to activate Cad99C-dependent endosome formation, norpA-dependent Ca2+ mobilization and p38 MAPK, which are essential steps in the Duox-dependent production of reactive oxygen species (ROS) in response to intestinal bacterial infection. During photoreceptor differentiation, it up-regulates transcription of Ubr3, which in turn promotes the hh-signaling pathway by mediating the ubiquitination and degradation of cos. The chain is Protein hedgehog (hh-1) from Drosophila pseudoobscura pseudoobscura (Fruit fly).